Consider the following 103-residue polypeptide: Co-chaperonin GroES (103 aa).

This sequence belongs to the GroES chaperonin family. As to quaternary structure, heptamer of 7 subunits arranged in a ring. Interacts with the chaperonin GroEL.

It localises to the cytoplasm. In terms of biological role, together with the chaperonin GroEL, plays an essential role in assisting protein folding. The GroEL-GroES system forms a nano-cage that allows encapsulation of the non-native substrate proteins and provides a physical environment optimized to promote and accelerate protein folding. GroES binds to the apical surface of the GroEL ring, thereby capping the opening of the GroEL channel. This is Co-chaperonin GroES from Synechocystis sp. (strain ATCC 27184 / PCC 6803 / Kazusa).